A 403-amino-acid polypeptide reads, in one-letter code: Peptidyl-prolyl cis-trans isomerase FKBP8 (403 aa).

The interval 26–54 (VLDGVDDAEEEDDLSGLPPLEDMGQPTVE) is disordered. Residues 28–39 (DGVDDAEEEDDL) are compositionally biased toward acidic residues. The region spanning 110–195 (GQVVTVHLQM…CLEVTLKTAE (86 aa)) is the PPIase FKBP-type domain. The stretch at 212 to 245 (ANRKRECGNAHYQRADFVLAANSYDLAIKAITSN) is one TPR 1 repeat. Glycyl lysine isopeptide (Lys-Gly) (interchain with G-Cter in ubiquitin) cross-links involve residues lysine 240, lysine 262, lysine 264, and lysine 275. TPR repeat units lie at residues 263–296 (VKCLNNLAASQLKLDHYRAALRSCSQVLEHQPDN) and 297–330 (IKALFRKGKVLAQQGEYSEAIPILRAALKLEPSN). The residue at position 287 (serine 287) is a Phosphoserine. Residues lysine 298, lysine 305, lysine 325, lysine 331, lysine 339, lysine 342, and lysine 343 each participate in a glycyl lysine isopeptide (Lys-Gly) (interchain with G-Cter in ubiquitin) cross-link. A helical transmembrane segment spans residues 381-401 (WLFGATAVALGGVALSVVIAA).

As to quaternary structure, homomultimers or heteromultimers (Potential). Forms heterodimer with calmodulin. When activated by calmodulin and calcium, interacts with the BH4 domain of BCL2 and weakly with BCLX isoform Bcl-X(L). Does not bind and inhibit calcineurin. Interacts with ZFYVE27; may negatively regulate ZFYVE27 phosphorylation. Ca(2+) serves as cofactor. Ubiquitinated by PRKN during mitophagy, leading to its degradation and enhancement of mitophagy. Deubiquitinated by USP30.

It localises to the mitochondrion membrane. The catalysed reaction is [protein]-peptidylproline (omega=180) = [protein]-peptidylproline (omega=0). Functionally, constitutively inactive PPiase, which becomes active when bound to calmodulin and calcium. Seems to act as a chaperone for BCL2, targets it to the mitochondria and modulates its phosphorylation state. The BCL2/FKBP8/calmodulin/calcium complex probably interferes with the binding of BCL2 to its targets. The active form of FKBP8 may therefore play a role in the regulation of apoptosis. The sequence is that of Peptidyl-prolyl cis-trans isomerase FKBP8 (Fkbp8) from Rattus norvegicus (Rat).